Here is a 213-residue protein sequence, read N- to C-terminus: Octanoyltransferase (213 aa).

A BPL/LPL catalytic domain is found at 32 to 207; it reads ENTPDEIWLV…NILALLNNPP (176 aa). Residues 71–78, 138–140, and 151–153 contribute to the substrate site; these read RGGQVTYH, SLG, and GLA. The Acyl-thioester intermediate role is filled by Cys169.

It belongs to the LipB family.

It is found in the cytoplasm. It carries out the reaction octanoyl-[ACP] + L-lysyl-[protein] = N(6)-octanoyl-L-lysyl-[protein] + holo-[ACP] + H(+). Its pathway is protein modification; protein lipoylation via endogenous pathway; protein N(6)-(lipoyl)lysine from octanoyl-[acyl-carrier-protein]: step 1/2. Its function is as follows. Catalyzes the transfer of endogenously produced octanoic acid from octanoyl-acyl-carrier-protein onto the lipoyl domains of lipoate-dependent enzymes. Lipoyl-ACP can also act as a substrate although octanoyl-ACP is likely to be the physiological substrate. In Citrobacter koseri (strain ATCC BAA-895 / CDC 4225-83 / SGSC4696), this protein is Octanoyltransferase.